A 381-amino-acid chain; its full sequence is Queuine tRNA-ribosyltransferase (381 aa).

Aspartate 96 serves as the catalytic Proton acceptor. Substrate is bound by residues 96–100 (DSGGF), aspartate 150, glutamine 193, and glycine 220. Positions 251–257 (GVGSPDA) are RNA binding. Aspartate 270 (nucleophile) is an active-site residue. The segment at 275 to 279 (TRIAR) is RNA binding; important for wobble base 34 recognition. Residues cysteine 308, cysteine 310, cysteine 313, and histidine 339 each contribute to the Zn(2+) site.

This sequence belongs to the queuine tRNA-ribosyltransferase family. In terms of assembly, homodimer. Within each dimer, one monomer is responsible for RNA recognition and catalysis, while the other monomer binds to the replacement base PreQ1. Requires Zn(2+) as cofactor.

The catalysed reaction is 7-aminomethyl-7-carbaguanine + guanosine(34) in tRNA = 7-aminomethyl-7-carbaguanosine(34) in tRNA + guanine. Its pathway is tRNA modification; tRNA-queuosine biosynthesis. Its function is as follows. Catalyzes the base-exchange of a guanine (G) residue with the queuine precursor 7-aminomethyl-7-deazaguanine (PreQ1) at position 34 (anticodon wobble position) in tRNAs with GU(N) anticodons (tRNA-Asp, -Asn, -His and -Tyr). Catalysis occurs through a double-displacement mechanism. The nucleophile active site attacks the C1' of nucleotide 34 to detach the guanine base from the RNA, forming a covalent enzyme-RNA intermediate. The proton acceptor active site deprotonates the incoming PreQ1, allowing a nucleophilic attack on the C1' of the ribose to form the product. After dissociation, two additional enzymatic reactions on the tRNA convert PreQ1 to queuine (Q), resulting in the hypermodified nucleoside queuosine (7-(((4,5-cis-dihydroxy-2-cyclopenten-1-yl)amino)methyl)-7-deazaguanosine). The protein is Queuine tRNA-ribosyltransferase of Bacillus velezensis (strain DSM 23117 / BGSC 10A6 / LMG 26770 / FZB42) (Bacillus amyloliquefaciens subsp. plantarum).